The following is an 810-amino-acid chain: Protein kinase C-binding protein NELL1 (810 aa).

An N-terminal signal peptide occupies residues 1–21; that stretch reads MPMDLILVVWFCVCTARTVVG. Asparagine 40, asparagine 53, asparagine 83, asparagine 224, asparagine 294, and asparagine 372 each carry an N-linked (GlcNAc...) asparagine glycan. A Laminin G-like domain is found at 64 to 227; that stretch reads EREIHAAPHV…TQCPNLNHTC (164 aa). The 62-residue stretch at 271–332 folds into the VWFC 1 domain; sequence KTCQVSGLLY…IAGQCCKVCR (62 aa). Intrachain disulfides connect cysteine 395/cysteine 407, cysteine 401/cysteine 416, and cysteine 418/cysteine 432. Ca(2+)-binding residues include aspartate 434, isoleucine 435, and glutamate 437. One can recognise an EGF-like 1; calcium-binding domain in the interval 434-475; the sequence is DIDECAAKMHYCHANTVCVNLPGLYRCDCVPGYIRVDDFSCT. Intrachain disulfides connect cysteine 438–cysteine 451, cysteine 445–cysteine 460, cysteine 462–cysteine 474, cysteine 480–cysteine 493, cysteine 487–cysteine 502, cysteine 504–cysteine 515, cysteine 519–cysteine 529, cysteine 523–cysteine 535, cysteine 537–cysteine 546, cysteine 553–cysteine 566, cysteine 560–cysteine 575, cysteine 577–cysteine 594, cysteine 600–cysteine 613, cysteine 607–cysteine 622, and cysteine 624–cysteine 630. Residues asparagine 453, leucine 454, and leucine 457 each contribute to the Ca(2+) site. Positions 476–516 constitute an EGF-like 2; calcium-binding domain; the sequence is EHDECGSGQHNCDENAICTNTVQGHSCTCKPGYVGNGTICR. The N-linked (GlcNAc...) asparagine glycan is linked to asparagine 511. In terms of domain architecture, EGF-like 3 spans 517–547; the sequence is AFCEEGCRYGGTCVAPNKCVCPSGFTGSHCE. Positions 549-587 constitute an EGF-like 4; calcium-binding domain; sequence DIDECSEGIIECHNHSRCVNLPGWYHCECRSGFHDDGTY. Asparagine 562 carries an N-linked (GlcNAc...) asparagine glycan. Positions 596–631 constitute an EGF-like 5; calcium-binding domain; the sequence is DIDECALRTHTCWNDSACINLAGGFDCLCPSGPSCS. Asparagine 609 is a glycosylation site (N-linked (GlcNAc...) asparagine). The VWFC 2 domain maps to 692–750; that stretch reads SQCLDQNGHKLYRSGDNWTHSCQQCRCLEGEVDCWPLTCPNLSCEYTAILEGECCPRCV. N-linked (GlcNAc...) asparagine glycans are attached at residues asparagine 708, asparagine 732, and asparagine 758.

Homotrimer. Binds to PKC beta-1. Interacts with ATRAID; the interaction promotes osteoblast cell differentiation and mineralization. Interacts with ROBO3.

The protein localises to the cytoplasm. It is found in the nucleus envelope. The protein resides in the secreted. Its function is as follows. Plays a role in the control of cell growth and differentiation. Promotes osteoblast cell differentiation and terminal mineralization. In Homo sapiens (Human), this protein is Protein kinase C-binding protein NELL1 (NELL1).